Consider the following 410-residue polypeptide: tRNA-guanine(15) transglycosylase (410 aa).

Asp-87 functions as the Nucleophile in the catalytic mechanism. Substrate contacts are provided by Asp-122 and Gly-187.

The protein belongs to the archaeosine tRNA-ribosyltransferase family. The cofactor is Zn(2+).

It catalyses the reaction guanosine(15) in tRNA + 7-cyano-7-deazaguanine = 7-cyano-7-carbaguanosine(15) in tRNA + guanine. It functions in the pathway tRNA modification; archaeosine-tRNA biosynthesis. Functionally, exchanges the guanine residue with 7-cyano-7-deazaguanine (preQ0) at position 15 in the dihydrouridine loop (D-loop) of archaeal tRNAs. The polypeptide is tRNA-guanine(15) transglycosylase (Nanoarchaeum equitans (strain Kin4-M)).